The following is a 317-amino-acid chain: Cytochrome c biogenesis protein CcsA (317 aa).

7 consecutive transmembrane segments (helical) span residues 13-35 (ISFS…HEIV), 44-64 (GMIA…IYSG), 71-91 (LYES…VPYF), 143-163 (MLLS…LLVI), 171-191 (MIGF…IKYL), 225-245 (VIGL…VWAN), and 286-306 (AIVA…VNLL).

Belongs to the CcmF/CycK/Ccl1/NrfE/CcsA family. May interact with Ccs1.

The protein localises to the plastid. It is found in the chloroplast thylakoid membrane. Required during biogenesis of c-type cytochromes (cytochrome c6 and cytochrome f) at the step of heme attachment. The chain is Cytochrome c biogenesis protein CcsA from Illicium oligandrum (Star anise).